The sequence spans 93 residues: Putative septation protein SpoVG (93 aa).

This sequence belongs to the SpoVG family.

Its function is as follows. Could be involved in septation. The polypeptide is Putative septation protein SpoVG (Treponema denticola (strain ATCC 35405 / DSM 14222 / CIP 103919 / JCM 8153 / KCTC 15104)).